The sequence spans 438 residues: tRNA wybutosine-synthesizing protein 2 homolog (438 aa).

S-adenosyl-L-methionine is bound by residues Ser-209, Lys-216, Glu-256, and Asp-284 to Asn-285.

Belongs to the class I-like SAM-binding methyltransferase superfamily. TRM5/TYW2 family.

It carries out the reaction 4-demethylwyosine(37) in tRNA(Phe) + S-adenosyl-L-methionine = 4-demethyl-7-[(3S)-3-amino-3-carboxypropyl]wyosine(37) in tRNA(Phe) + S-methyl-5'-thioadenosine + H(+). The protein operates within tRNA modification; wybutosine-tRNA(Phe) biosynthesis. Its function is as follows. S-adenosyl-L-methionine-dependent transferase that acts as a component of the wybutosine biosynthesis pathway. Wybutosine is a hyper modified guanosine with a tricyclic base found at the 3'-position adjacent to the anticodon of eukaryotic phenylalanine tRNA. Catalyzes the transfer of the alpha-amino-alpha-carboxypropyl (acp) group from S-adenosyl-L-methionine to the C-7 position of 4-demethylwyosine (imG-14) to produce wybutosine-86. The protein is tRNA wybutosine-synthesizing protein 2 homolog (TRMT12) of Bos taurus (Bovine).